The sequence spans 299 residues: MKPDAHHVKQFLLRLQDDICQKLSAVDGANFVEDSWRREAGGGGRSRVLRNGGIFEQAGVNFSHVHGDAMPASATAHRPELAGRSFEAMGVSLVVHPHNPYIPTSHANVRFFIAEKPGADPVWWFGGGFDLTPYYGFEEDAVHWHRTARDLCQPFGDDVYPRYKKWCDDYFFLKHRNEQRGIGGLFFDDLNTPDFDHCFDFMQAVGNGYTRAYLPIVERRKAMVWGERERNFQLYRRGRYVEFNLVWDRGTLFGLQTGGRTESILMSMPPLVRWEYDWQPEAGSPEAALSEFIQVRDWI.

S92 is a binding site for substrate. The a divalent metal cation site is built by H96 and H106. Catalysis depends on H106, which acts as the Proton donor. Residue 108 to 110 (NVR) participates in substrate binding. A divalent metal cation-binding residues include H145 and H175. The segment at 240–275 (YVEFNLVWDRGTLFGLQTGGRTESILMSMPPLVRWE) is important for dimerization. Position 258-260 (258-260 (GGR)) interacts with substrate.

The protein belongs to the aerobic coproporphyrinogen-III oxidase family. Homodimer. A divalent metal cation is required as a cofactor.

It is found in the cytoplasm. It carries out the reaction coproporphyrinogen III + O2 + 2 H(+) = protoporphyrinogen IX + 2 CO2 + 2 H2O. Its pathway is porphyrin-containing compound metabolism; protoporphyrin-IX biosynthesis; protoporphyrinogen-IX from coproporphyrinogen-III (O2 route): step 1/1. Functionally, involved in the heme biosynthesis. Catalyzes the aerobic oxidative decarboxylation of propionate groups of rings A and B of coproporphyrinogen-III to yield the vinyl groups in protoporphyrinogen-IX. The protein is Oxygen-dependent coproporphyrinogen-III oxidase of Salmonella choleraesuis (strain SC-B67).